The following is a 683-amino-acid chain: Glycine--tRNA ligase beta subunit (683 aa).

This sequence belongs to the class-II aminoacyl-tRNA synthetase family. Tetramer of two alpha and two beta subunits.

The protein localises to the cytoplasm. The catalysed reaction is tRNA(Gly) + glycine + ATP = glycyl-tRNA(Gly) + AMP + diphosphate. The chain is Glycine--tRNA ligase beta subunit from Pseudomonas putida (strain GB-1).